The primary structure comprises 474 residues: Cysteine--tRNA ligase (474 aa).

Position 27 (Cys27) interacts with Zn(2+). Positions 29–39 (PTVYNYIHIGN) match the 'HIGH' region motif. Cys212, His237, and Glu241 together coordinate Zn(2+). The 'KMSKS' region signature appears at 271 to 275 (KMSKS). ATP is bound at residue Lys274.

The protein belongs to the class-I aminoacyl-tRNA synthetase family. In terms of assembly, monomer. It depends on Zn(2+) as a cofactor.

It localises to the cytoplasm. The catalysed reaction is tRNA(Cys) + L-cysteine + ATP = L-cysteinyl-tRNA(Cys) + AMP + diphosphate. The chain is Cysteine--tRNA ligase from Lactobacillus delbrueckii subsp. bulgaricus (strain ATCC 11842 / DSM 20081 / BCRC 10696 / JCM 1002 / NBRC 13953 / NCIMB 11778 / NCTC 12712 / WDCM 00102 / Lb 14).